The following is a 477-amino-acid chain: MFRLNALSALAELAVGSRWYHGTSQPTQTKRRLMLVAFLGASAVTASTGLLWKKAHAESPPSVNSKKTDAGDKGKSKDTREVSSHEGSAADTAAEPYPEEKKKKRSGFRDRKVMEYENRIRAYSTPDKIFRYFATLKVINEPGETEVFMTPQDFVRSITPNEKQPEHLGLDQYIIKRFDGKKIAQEREKFADEGSIFYTLGECGLISFSDYIFLTTVLSTPQRNFEIAFKMFDLNGDGEVDMEEFEQVQSIIRSQTSMGMRHRDRPTTGNTLKSGLCSALTTYFFGADLKGKLTIKNFLEFQRKLQHDVLKLEFERHDPVDGRISERQFGGMLLAYSGVQSKKLTAMQRQLKKHFKDGKGLTFQEVENFFTFLKNINDVDTALSFYHMAGASLDKVTMQQVARTVAKVELSDHVCDVVFALFDCDGNGELSNKEFVSIMKQRLMRGLEKPKDMGFTRLMQAMWKCAQETAWDFALPK.

A mitochondrion-targeting transit peptide spans 1–33 (MFRLNALSALAELAVGSRWYHGTSQPTQTKRRL). Positions 55–108 (AHAESPPSVNSKKTDAGDKGKSKDTREVSSHEGSAADTAAEPYPEEKKKKRSGF) are disordered. Basic and acidic residues predominate over residues 66 to 84 (KKTDAGDKGKSKDTREVSS). A polybasic region region spans residues 101-112 (KKKKRSGFRDRK). Ser-124 carries the phosphoserine modification. The k/R-ring stretch occupies residues 128–131 (KIFR). One can recognise an EF-hand 1 domain in the interval 220 to 255 (TPQRNFEIAFKMFDLNGDGEVDMEEFEQVQSIIRSQ). Residues Asp-233, Asn-235, Asp-237, Glu-239, and Glu-244 each coordinate Ca(2+). The segment at 261 to 265 (RHRDR) is k/R-ring. The EF-hand 2; degenerate domain occupies 356 to 376 (KDGKGLTFQEVENFFTFLKNI). The EF-hand 3 domain maps to 410–445 (LSDHVCDVVFALFDCDGNGELSNKEFVSIMKQRLMR). Asp-423, Asp-425, Asn-427, Glu-429, and Glu-434 together coordinate Ca(2+). Arg-457 carries the asymmetric dimethylarginine modification. The interval 457–467 (RLMQAMWKCAQ) is C-helix region.

It belongs to the MICU1 family. MICU1 subfamily. As to quaternary structure, heterodimer; disulfide-linked; heterodimerizes with MICU2 or MICU3. Homodimer; disulfide-linked. Component of the uniplex complex, composed of MCU, EMRE/SMDT1, MICU1 and MICU2 (or MICU3) in a 4:4:1:1 stoichiometry. The composition of calcium sensors within the uniplex complex can differ depending on tissues: a MICU1 homodimer can be present instead of the MICU1-MICU2 heterodimer in skeletal-muscle and kidney. MICU1 is recruited to the uniplex complex by EMRE/SMDT1, and it associates with MCU at low calcium levels, occluding the pore of the MCU channel. Associates with the MICOS complex. Interacts with SLC25A23. Interacts with CHCHD4/MIA40; which introduces the interchain disulfide bond with MICU2. Interacts (when methylated) with UCP2; leading to decrease the calcium sensitivity of MICU1. In terms of processing, phosphorylation at Ser-124 by AKT1 impairs its maturation and stability. Asymmetric dimethylation at Arg-457 by PRMT1 decreases the calcium sensitivity of MICU1 by promoting interaction with UCP2. Post-translationally, degraded by YME1L1 when not complexed as homodimer or heterodimer. Not degraded when complexed as homodimer or heterodimer; the presence of the interchain disulfide bond protecting MICU1 from degradation by YME1L1.

Its subcellular location is the mitochondrion intermembrane space. The protein resides in the mitochondrion inner membrane. Its function is as follows. Calcium sensor of the mitochondrial calcium uniporter (MCU) channel, which senses calcium level via its EF-hand domains. MICU1 and MICU2 (or MICU3) form a disulfide-linked heterodimer that stimulates and inhibits MCU activity, depending on the concentration of calcium. At low calcium levels, MICU1 occludes the pore of the MCU channel, preventing mitochondrial calcium uptake. At higher calcium levels, calcium-binding to MICU1 and MICU2 (or MICU3) induces a conformational change that weakens MCU-MICU1 interactions and moves the MICU1-MICU2 heterodimer away from the pore, allowing calcium permeation through the MCU channel. Also required to protect against manganese toxicity by preventing manganese uptake by MCU: mechanistically, manganese-binding to its EF-hand domains does not induce any conformational change, maintaining MCU pore occlusion. Acts as a regulator of mitochondrial cristae structure independently of its ability to regulate the mitochondrial calcium uniporter channel. Regulates glucose-dependent insulin secretion in pancreatic beta-cells by regulating mitochondrial calcium uptake. Induces T-helper 1-mediated autoreactivity, which is accompanied by the release of IFNG. This Rattus norvegicus (Rat) protein is Calcium uptake protein 1, mitochondrial (Micu1).